The following is a 324-amino-acid chain: Carbonic anhydrase, chloroplastic (324 aa).

It belongs to the beta-class carbonic anhydrase family. As to quaternary structure, homohexamer.

The protein localises to the plastid. It is found in the chloroplast stroma. It catalyses the reaction hydrogencarbonate + H(+) = CO2 + H2O. In terms of biological role, reversible hydration of carbon dioxide. The sequence is that of Carbonic anhydrase, chloroplastic from Hordeum vulgare (Barley).